The chain runs to 271 residues: Putative phosphoenolpyruvate synthase regulatory protein (271 aa).

Glycine 151–threonine 158 serves as a coordination point for ADP.

Belongs to the pyruvate, phosphate/water dikinase regulatory protein family. PSRP subfamily.

The enzyme catalyses [pyruvate, water dikinase] + ADP = [pyruvate, water dikinase]-phosphate + AMP + H(+). The catalysed reaction is [pyruvate, water dikinase]-phosphate + phosphate + H(+) = [pyruvate, water dikinase] + diphosphate. Functionally, bifunctional serine/threonine kinase and phosphorylase involved in the regulation of the phosphoenolpyruvate synthase (PEPS) by catalyzing its phosphorylation/dephosphorylation. This Burkholderia mallei (strain NCTC 10247) protein is Putative phosphoenolpyruvate synthase regulatory protein.